A 133-amino-acid chain; its full sequence is Small ribosomal subunit protein eS24z (133 aa).

Residues 104–133 (KSRKQIKERKNRAKKIRGVKKTKAGDAKKK) form a disordered region. Basic residues predominate over residues 109-125 (IKERKNRAKKIRGVKKT).

This sequence belongs to the eukaryotic ribosomal protein eS24 family.

The polypeptide is Small ribosomal subunit protein eS24z (RPS24A) (Arabidopsis thaliana (Mouse-ear cress)).